Consider the following 118-residue polypeptide: LYR motif containing protein 1 (118 aa).

Residues 91 to 118 (TQKGRKLRAQQRLRKQAKPVYLQSQDET) form a disordered region. Residues 93–107 (KGRKLRAQQRLRKQA) show a composition bias toward basic residues.

The protein belongs to the complex I LYR family.

The sequence is that of LYR motif containing protein 1 (lyrm1) from Danio rerio (Zebrafish).